We begin with the raw amino-acid sequence, 97 residues long: Alpha-latrotoxin associated low molecular weight protein 2 (97 aa).

The signal sequence occupies residues 1-19 (MFKLICIVFIATILSITSA). Cystine bridges form between Cys36–Cys72, Cys52–Cys68, and Cys55–Cys81.

This sequence belongs to the arthropod CHH/MIH/GIH/VIH hormone family. In terms of tissue distribution, expressed by the venom gland.

The protein localises to the secreted. May increase the toxicity of alpha-latrotoxin and/or other venom components. Is non-toxic to mice and to the cockroach Periplaneta americana. The sequence is that of Alpha-latrotoxin associated low molecular weight protein 2 from Steatoda grossa (False black widow).